The primary structure comprises 354 residues: Phenylalanine 4-monooxygenase, chloroplastic (354 aa).

A chloroplast-targeting transit peptide spans 1–60 (MAFPLQKTFLCSNGQSFPCSNGRSTSTLLASDLKFQRLNKPFILRVGSMQIRNSPKEHPR). The Fe cation site is built by histidine 229, histidine 234, and glutamate 274.

It belongs to the biopterin-dependent aromatic amino acid hydroxylase family. As to quaternary structure, forms monomers. Requires Fe(2+) as cofactor.

The protein resides in the plastid. The protein localises to the chloroplast. It carries out the reaction (6R)-L-erythro-5,6,7,8-tetrahydrobiopterin + L-phenylalanine + O2 = (4aS,6R)-4a-hydroxy-L-erythro-5,6,7,8-tetrahydrobiopterin + L-tyrosine. Catalyzes the hydroxylation of L-phenylalanine to L-tyrosine. Does not seem to be tetrahydropterin-dependent and shows preference for 10-formyltetrahydrofolate as cosubstrate and electron donor. The polypeptide is Phenylalanine 4-monooxygenase, chloroplastic (Pinus taeda (Loblolly pine)).